We begin with the raw amino-acid sequence, 454 residues long: Glutamine synthetase (454 aa).

Residues 19–111 form the GS beta-grasp domain; it reads NNVKFIRFQF…VICDVYKDEK (93 aa). In terms of domain architecture, GS catalytic spans 118–454; that stretch reads PRSRLKAILE…DWETGKYLIY (337 aa). Positions 142 and 144 each coordinate Mg(2+). Glutamate 194 contributes to the ATP binding site. 2 residues coordinate Mg(2+): glutamate 199 and glutamate 206. L-glutamate-binding positions include 250–251 and glycine 251; that span reads NG. Residue histidine 255 coordinates Mg(2+). Residues 257–259 and serine 259 contribute to the ATP site; that span reads HQS. 3 residues coordinate L-glutamate: arginine 309, glutamate 315, and arginine 327. Residues arginine 327, arginine 332, and lysine 339 each coordinate ATP. Residue glutamate 344 participates in Mg(2+) binding. Arginine 346 is an L-glutamate binding site.

Belongs to the glutamine synthetase family. As to quaternary structure, oligomer of 12 subunits arranged in the form of two hexagons. Mg(2+) serves as cofactor.

The protein resides in the cytoplasm. The catalysed reaction is L-glutamate + NH4(+) + ATP = L-glutamine + ADP + phosphate + H(+). Feedback inhibited by glycine and alanine, and inhibited by low concentrations of methionine sulfoximine. In terms of biological role, probably involved in nitrogen metabolism via ammonium assimilation. Catalyzes the ATP-dependent biosynthesis of glutamine from glutamate and ammonia. Beta-glutamate is a much poorer substrate than alpha-glutamate. In Methanocaldococcus jannaschii (strain ATCC 43067 / DSM 2661 / JAL-1 / JCM 10045 / NBRC 100440) (Methanococcus jannaschii), this protein is Glutamine synthetase.